We begin with the raw amino-acid sequence, 337 residues long: MDPAVSPASTDPLDTHASGAGAAPIPVCPTPERYFYTSQCPDINHLRSLSILNRWLETELVFVGDEEDVSKLSEGELGFYRFLFAFLSAADDLVTENLGGLSGLFEQKDILHYYVEQECIEVVHSRVYNIIQLVLFHNNDQARRAYVARTINHPAIRVKVDWLEARVRECDSIPEKFILMILIEGVFFAASFAAIAYLRTNNLLRVTCQSNDLISRDEAVHTTASCYIYNNYLGGHAKPEAARVYRLFREAVDIEIGFIRSQAPTDSSILSPGALAAIENYVRFSADRLLGLIHMQPLYSAPAPDASFPLSLMSTDKHTNFFECRSTSYAGAVVNDL.

The interval 1-22 is disordered; it reads MDPAVSPASTDPLDTHASGAGA. Residues aspartate 91, glutamate 121, and histidine 124 each contribute to the Fe cation site. Residue tyrosine 128 is part of the active site. Residues 177 to 197 traverse the membrane as a helical segment; sequence FILMILIEGVFFAASFAAIAY. The Fe cation site is built by glutamate 184, glutamate 218, and histidine 221.

Belongs to the ribonucleoside diphosphate reductase small chain family. As to quaternary structure, heterotetramer composed of a homodimer of the large subunit (R1) and a homodimer of the small subunit (R2). Larger multisubunit protein complex are also active, composed of (R1)n(R2)n. Fe cation is required as a cofactor.

It localises to the host membrane. It carries out the reaction a 2'-deoxyribonucleoside 5'-diphosphate + [thioredoxin]-disulfide + H2O = a ribonucleoside 5'-diphosphate + [thioredoxin]-dithiol. Functionally, ribonucleoside-diphosphate reductase holoenzyme provides the precursors necessary for viral DNA synthesis. Allows virus growth in non-dividing cells, as well as reactivation from latency in infected hosts. Catalyzes the biosynthesis of deoxyribonucleotides from the corresponding ribonucleotides. The protein is Ribonucleoside-diphosphate reductase small subunit of Human herpesvirus 2 (strain 333) (HHV-2).